We begin with the raw amino-acid sequence, 344 residues long: Protein L-Myc-1-A (344 aa).

Disordered regions lie at residues 100-162 (RLTT…DDEI) and 209-261 (PPEP…EDIV). 3 stretches are compositionally biased toward polar residues: residues 102–112 (TTASPRATNPQ), 123–133 (PGVNSIEQNAN), and 236–255 (PALQQCSSPMPGSPLASGSS). The bHLH domain occupies 261–313 (VKKKNHNYLERKRRNDLRSRFLALREEVPSLTRSTKTPKVVVLSKATEFLKGL). The segment at 313-341 (LVIQEQQLTAEKFKLWSRHQQLLRRISHL) is leucine-zipper.

As to quaternary structure, efficient DNA binding requires dimerization with another bHLH protein. Binds DNA as a heterodimer with MAX. In terms of tissue distribution, high levels in oocytes, modest levels in kidney and low levels in spleen.

It is found in the nucleus. The chain is Protein L-Myc-1-A (mycl1-a) from Xenopus laevis (African clawed frog).